We begin with the raw amino-acid sequence, 89 residues long: MARSLKKGPFVDHHLAKKVESAAGSKKPIKTWSRRSMILPEMVGITIAVHNGKNHIPVLVNENMVGHKLGEFAVTRTFKGHGGDKKSSR.

This sequence belongs to the universal ribosomal protein uS19 family.

Protein S19 forms a complex with S13 that binds strongly to the 16S ribosomal RNA. In Xanthomonas campestris pv. campestris (strain 8004), this protein is Small ribosomal subunit protein uS19.